The following is a 361-amino-acid chain: Peptide chain release factor 1 (361 aa).

Gln237 carries the post-translational modification N5-methylglutamine. The segment covering 284 to 296 (EDEKRRSEEDSTR) has biased composition (basic and acidic residues). The disordered stretch occupies residues 284 to 305 (EDEKRRSEEDSTRRNLVSSGDR).

Belongs to the prokaryotic/mitochondrial release factor family. Methylated by PrmC. Methylation increases the termination efficiency of RF1.

Its subcellular location is the cytoplasm. Peptide chain release factor 1 directs the termination of translation in response to the peptide chain termination codons UAG and UAA. In Shewanella piezotolerans (strain WP3 / JCM 13877), this protein is Peptide chain release factor 1.